Reading from the N-terminus, the 267-residue chain is L-aspartate dehydrogenase (267 aa).

The NAD(+) site is built by alanine 124 and asparagine 190. Histidine 218 is an active-site residue.

It belongs to the L-aspartate dehydrogenase family.

It carries out the reaction L-aspartate + NADP(+) + H2O = oxaloacetate + NH4(+) + NADPH + H(+). The catalysed reaction is L-aspartate + NAD(+) + H2O = oxaloacetate + NH4(+) + NADH + H(+). The protein operates within cofactor biosynthesis; NAD(+) biosynthesis; iminoaspartate from L-aspartate (dehydrogenase route): step 1/1. Functionally, specifically catalyzes the NAD or NADP-dependent dehydrogenation of L-aspartate to iminoaspartate. This chain is L-aspartate dehydrogenase, found in Methanococcus maripaludis (strain C6 / ATCC BAA-1332).